The sequence spans 170 residues: Adenine phosphoribosyltransferase (170 aa).

It belongs to the purine/pyrimidine phosphoribosyltransferase family. In terms of assembly, homodimer.

The protein resides in the cytoplasm. It carries out the reaction AMP + diphosphate = 5-phospho-alpha-D-ribose 1-diphosphate + adenine. The protein operates within purine metabolism; AMP biosynthesis via salvage pathway; AMP from adenine: step 1/1. Its function is as follows. Catalyzes a salvage reaction resulting in the formation of AMP, that is energically less costly than de novo synthesis. The polypeptide is Adenine phosphoribosyltransferase (Geobacillus kaustophilus (strain HTA426)).